The chain runs to 817 residues: Two pore calcium channel protein 1 (817 aa).

Topologically, residues 1–101 are cytoplasmic; it reads MSVILDDDVL…PKDARALAAY (101 aa). The disordered stretch occupies residues 22–66; it reads PLTPSNGLGQEDLPSKNGGGQSGPNSQVPSLVSGADSPPSSPPGH. A helical transmembrane segment spans residues 102–122; sequence LFVHNHFFYMMELLTALLLLL. Over 123–137 the chain is Extracellular; it reads LSLCESPAVPALKLR. Residues 138–158 traverse the membrane as a helical segment; sequence TYVHATLELFALMVVVFELCM. Residues 159-172 are Cytoplasmic-facing; the sequence is KLRWLGFHTFVRHK. Residues 173–193 traverse the membrane as a helical segment; it reads RTMVKTSVLVVQFIEAIVVLV. Over 194-202 the chain is Extracellular; sequence RQTSHVRVT. The helical transmembrane segment at 203–221 threads the bilayer; it reads RALRCIFLVDCRYCGGVRR. The Cytoplasmic portion of the chain corresponds to 222–235; that stretch reads NLRQIFQSLPPFMD. Residues 236–256 traverse the membrane as a helical segment; that stretch reads ILLLLLFFMIIFAILGFYLFS. Over 257–263 the chain is Extracellular; sequence TNPSDPY. The segment at residues 264–287 is an intramembrane region (helical; Pore-forming); sequence FNTLENSIVNLFVLLTTANFPDVM. Residues 288-298 lie on the Extracellular side of the membrane; it reads MPSYSRNPWSC. A helical transmembrane segment spans residues 299 to 319; the sequence is VFFIVYLSIELYFIMNLLLAV. Over 320–445 the chain is Cytoplasmic; it reads VFDTFNDIEK…NILVNSKAFQ (126 aa). The helical transmembrane segment at 446-466 threads the bilayer; that stretch reads YFMYLVVAVNGVWILVETFML. Residues 467–480 lie on the Extracellular side of the membrane; sequence KGGNFISKHVPWSY. A helical membrane pass occupies residues 481–501; it reads LVFLTIYGVELFMKVAGLGPV. Topologically, residues 502-504 are cytoplasmic; that stretch reads EYL. Residues 505–527 traverse the membrane as a helical segment; it reads SSGWNLFDFSVTAFAFLGLLALT. Over 528–535 the chain is Extracellular; it reads LNMEPFYF. The helical transmembrane segment at 536 to 550 threads the bilayer; it reads IVVLRPLQLLRLFKL. At 551 to 574 the chain is on the cytoplasmic side; it reads KKRYRNVLDTMFELLPRMASLGLT. A helical transmembrane segment spans residues 575–595; that stretch reads LLTFYYSFAIVGMEFFSGRLS. Residues 596 to 630 are Extracellular-facing; it reads PNCCNSSTVADAYRFINHTVGNKTKVEEGYYYLNN. Positions 631–654 form an intramembrane region, helical; Pore-forming; sequence FDNILNSFVTLFELTVVNNWYIIM. At 655-671 the chain is on the extracellular side; that stretch reads EGVTSQTSHWSRLYFMT. A helical transmembrane segment spans residues 672–692; it reads FYIVTMVVMTIIVAFILEAFV. At 693–817 the chain is on the cytoplasmic side; it reads FRMNYSRKSQ…GSRQRSQTVT (125 aa). Residues 770 to 794 are a coiled coil; sequence SLKMYQEEIQEWYEEHAREQEQQQL. A disordered region spans residues 785–817; that stretch reads HAREQEQQQLRGSAPSPAAQQTPGSRQRSQTVT. Residues 802 to 817 are compositionally biased toward polar residues; sequence AAQQTPGSRQRSQTVT.

The protein belongs to the calcium channel alpha-1 subunit (TC 1.A.1.11) family. Two pore calcium channel subfamily. Dimer. Interacts with MTOR; the interaction is required for TPCN1 ATP sensitivity. Interacts with STX7, STX8 and STX12. Interacts with JPT2. Found in a complex with LSM12, TPCN1 and TPCN2. N-glycosylated. As to expression, widely expressed. Expressed at relatively high level in kidney, liver and lung, and in the kidney it is expressed at inner medullary collecting ducts.

Its subcellular location is the lysosome membrane. It localises to the endosome membrane. The protein resides in the early endosome membrane. It is found in the recycling endosome membrane. The catalysed reaction is Na(+)(in) = Na(+)(out). It carries out the reaction Ca(2+)(in) = Ca(2+)(out). With respect to regulation, na(+) current is inhibited by ATP in a MTORC-dependent manner. ATP sensitivity is independent of PI(3,5)P2. Probably regulated by Mg(2+) ions, cytosolic Mg(2+) selectively inhibits outward current while lysosomal Mg(2+) modestly inhibits both the outward and inward currents. In the absence of Mg(2+), NAADP readily activates TPCN2, with properties similar to PI(3,5)P2. Both current elicited by PI(3,5)P2 as well as NAADP are inhibited by tetrandrine. In terms of biological role, intracellular channel initially characterized as a non-selective Ca(2+)-permeable channel activated by NAADP (nicotinic acid adenine dinucleotide phosphate), it is also a voltage-gated highly-selective Na(+) channel activated directly by PI(3,5)P2 (phosphatidylinositol 3,5-bisphosphate) that senses pH changes and confers electrical excitability to organelles. Localizes to the early and recycling endosomes membranes where it plays a role in the uptake and processing of proteins and regulates organellar membrane excitability, membrane trafficking and pH homeostasis. Ion selectivity is not fixed but rather agonist-dependent and under defined ionic conditions, can be readily activated by both NAADP and PI(3,5)P2. Required for mTOR-dependent nutrient sensing. This Rattus norvegicus (Rat) protein is Two pore calcium channel protein 1 (Tpcn1).